The chain runs to 283 residues: Formamidopyrimidine-DNA glycosylase (283 aa).

Proline 2 functions as the Schiff-base intermediate with DNA in the catalytic mechanism. Catalysis depends on glutamate 3, which acts as the Proton donor. Lysine 60 acts as the Proton donor; for beta-elimination activity in catalysis. Histidine 100, arginine 119, and arginine 164 together coordinate DNA. An FPG-type zinc finger spans residues 249–283 (WVYGRENKPCRKCGVKILKAKVAGRGTHWCPNCQK). Arginine 273 serves as the catalytic Proton donor; for delta-elimination activity.

The protein belongs to the FPG family. In terms of assembly, monomer. Requires Zn(2+) as cofactor.

The enzyme catalyses Hydrolysis of DNA containing ring-opened 7-methylguanine residues, releasing 2,6-diamino-4-hydroxy-5-(N-methyl)formamidopyrimidine.. It catalyses the reaction 2'-deoxyribonucleotide-(2'-deoxyribose 5'-phosphate)-2'-deoxyribonucleotide-DNA = a 3'-end 2'-deoxyribonucleotide-(2,3-dehydro-2,3-deoxyribose 5'-phosphate)-DNA + a 5'-end 5'-phospho-2'-deoxyribonucleoside-DNA + H(+). Functionally, involved in base excision repair of DNA damaged by oxidation or by mutagenic agents. Acts as a DNA glycosylase that recognizes and removes damaged bases. Has a preference for oxidized purines, such as 7,8-dihydro-8-oxoguanine (8-oxoG). Has AP (apurinic/apyrimidinic) lyase activity and introduces nicks in the DNA strand. Cleaves the DNA backbone by beta-delta elimination to generate a single-strand break at the site of the removed base with both 3'- and 5'-phosphates. The polypeptide is Formamidopyrimidine-DNA glycosylase (Prochlorococcus marinus (strain SARG / CCMP1375 / SS120)).